The chain runs to 131 residues: MRHYELVLLVHPDQSDQVVGMVERYIKLVQDNNGTIHRLEDWGRRQLAYPINKIHKAHYVLFNIETDGETLAELEELFRYNDAIIRSLVMRRDDAVTEESQLAKNADEKRARKATTRRPDSNDDNDNHSDD.

Residues Asp94 to Asp131 are disordered. The span at Arg117–Asp131 shows a compositional bias: basic and acidic residues.

It belongs to the bacterial ribosomal protein bS6 family.

Its function is as follows. Binds together with bS18 to 16S ribosomal RNA. In Psychrobacter cryohalolentis (strain ATCC BAA-1226 / DSM 17306 / VKM B-2378 / K5), this protein is Small ribosomal subunit protein bS6.